Consider the following 125-residue polypeptide: MPRPMKWRKVCCLPESNRFGPLDLNAGDQYQVKMTVDEYETIRLIDLEGFTQEECAKKMNVARTTVQGIYIEARKKLAESLVNGKVLQIEGGEYRLCDGLGNGCGQGCYKRRRRMGCSGKEEGED.

This sequence belongs to the UPF0251 family.

This chain is UPF0251 protein Dhaf_1981, found in Desulfitobacterium hafniense (strain DSM 10664 / DCB-2).